We begin with the raw amino-acid sequence, 240 residues long: 4-hydroxy-tetrahydrodipicolinate reductase (240 aa).

NAD(+)-binding positions include 79-81 (ATT) and 103-106 (SANM). His-135 serves as the catalytic Proton donor/acceptor. His-136 contributes to the (S)-2,3,4,5-tetrahydrodipicolinate binding site. Residue Lys-139 is the Proton donor of the active site. Residue 145–146 (GT) participates in (S)-2,3,4,5-tetrahydrodipicolinate binding.

This sequence belongs to the DapB family.

Its subcellular location is the cytoplasm. The enzyme catalyses (S)-2,3,4,5-tetrahydrodipicolinate + NAD(+) + H2O = (2S,4S)-4-hydroxy-2,3,4,5-tetrahydrodipicolinate + NADH + H(+). It catalyses the reaction (S)-2,3,4,5-tetrahydrodipicolinate + NADP(+) + H2O = (2S,4S)-4-hydroxy-2,3,4,5-tetrahydrodipicolinate + NADPH + H(+). It participates in amino-acid biosynthesis; L-lysine biosynthesis via DAP pathway; (S)-tetrahydrodipicolinate from L-aspartate: step 4/4. In terms of biological role, catalyzes the conversion of 4-hydroxy-tetrahydrodipicolinate (HTPA) to tetrahydrodipicolinate. The chain is 4-hydroxy-tetrahydrodipicolinate reductase from Staphylococcus aureus (strain Mu3 / ATCC 700698).